The chain runs to 136 residues: uncharacterized protein (136 aa).

A disordered region spans residues 1 to 100 (MQSREPSGWR…PCSGGPDRPE (100 aa)). Residues 66 to 75 (RLLRWHHRVP) are compositionally biased toward basic residues.

This is an uncharacterized protein from Homo sapiens (Human).